The primary structure comprises 449 residues: Sensor protein QseC (449 aa).

The Cytoplasmic portion of the chain corresponds to 1–12 (MKFTQRLSLRVR). Residues 13-33 (LTLIFLILASVTWLLSSFVAW) form a helical membrane-spanning segment. The Periplasmic segment spans residues 34-156 (KQTTDNVDEL…QEWEYREDMA (123 aa)). The chain crosses the membrane as a helical span at residues 157–177 (LAIVAGQLIPWLVALPIMLII). Over 178 to 449 (MMVLLGRELA…QGGFEAKVSW (272 aa)) the chain is Cytoplasmic. In terms of domain architecture, Histidine kinase spans 243–449 (DAAHELRSPL…QGGFEAKVSW (207 aa)). The residue at position 246 (His-246) is a Phosphohistidine; by autocatalysis.

The protein localises to the cell inner membrane. It carries out the reaction ATP + protein L-histidine = ADP + protein N-phospho-L-histidine.. Its function is as follows. Member of a two-component regulatory system QseB/QseC. Activates the flagella regulon by activating transcription of FlhDC. May activate QseB by phosphorylation. This chain is Sensor protein QseC (qseC), found in Escherichia coli (strain K12).